The chain runs to 179 residues: MVKLVVGIGNPGRQYVWTRHNIGFLLLDSLASRFLGAFREAPRLYASFAKVEISSEAVVLMKPTTYVNLTGKAVLAAKKFFDVSMEDILVVADDINREFGFVRFRQDCGSGGHNGIKNTTQILQSNHYWQLRLGVGRPSYPGAEGVADYVLSSFSLNEKEKLNDFLEKGIEEILPWLGC.

Residue Tyr15 coordinates tRNA. Residue His20 is the Proton acceptor of the active site. TRNA contacts are provided by Tyr66, Asn68, and Asn114.

It belongs to the PTH family. Monomer.

The protein localises to the cytoplasm. The enzyme catalyses an N-acyl-L-alpha-aminoacyl-tRNA + H2O = an N-acyl-L-amino acid + a tRNA + H(+). In terms of biological role, hydrolyzes ribosome-free peptidyl-tRNAs (with 1 or more amino acids incorporated), which drop off the ribosome during protein synthesis, or as a result of ribosome stalling. Functionally, catalyzes the release of premature peptidyl moieties from peptidyl-tRNA molecules trapped in stalled 50S ribosomal subunits, and thus maintains levels of free tRNAs and 50S ribosomes. The polypeptide is Peptidyl-tRNA hydrolase (Chlamydia trachomatis serovar L2 (strain ATCC VR-902B / DSM 19102 / 434/Bu)).